The sequence spans 333 residues: Phosphoribosylformylglycinamidine cyclo-ligase (333 aa).

It belongs to the AIR synthase family.

The protein localises to the cytoplasm. It catalyses the reaction 2-formamido-N(1)-(5-O-phospho-beta-D-ribosyl)acetamidine + ATP = 5-amino-1-(5-phospho-beta-D-ribosyl)imidazole + ADP + phosphate + H(+). The protein operates within purine metabolism; IMP biosynthesis via de novo pathway; 5-amino-1-(5-phospho-D-ribosyl)imidazole from N(2)-formyl-N(1)-(5-phospho-D-ribosyl)glycinamide: step 2/2. The chain is Phosphoribosylformylglycinamidine cyclo-ligase from Methanosarcina mazei (strain ATCC BAA-159 / DSM 3647 / Goe1 / Go1 / JCM 11833 / OCM 88) (Methanosarcina frisia).